A 392-amino-acid polypeptide reads, in one-letter code: Dual-specificity RNA methyltransferase RlmN (392 aa).

The Proton acceptor role is filled by Glu116. One can recognise a Radical SAM core domain in the interval 122-364; it reads EEGRGTLCVS…SPIRTPRGED (243 aa). Cys129 and Cys369 form a disulfide bridge. Cys136, Cys140, and Cys143 together coordinate [4Fe-4S] cluster. Residues 195-196, Ser227, 249-251, and Asn326 each bind S-adenosyl-L-methionine; these read GE and SFH. Residue Cys369 is the S-methylcysteine intermediate of the active site.

It belongs to the radical SAM superfamily. RlmN family. [4Fe-4S] cluster serves as cofactor.

Its subcellular location is the cytoplasm. It catalyses the reaction adenosine(2503) in 23S rRNA + 2 reduced [2Fe-2S]-[ferredoxin] + 2 S-adenosyl-L-methionine = 2-methyladenosine(2503) in 23S rRNA + 5'-deoxyadenosine + L-methionine + 2 oxidized [2Fe-2S]-[ferredoxin] + S-adenosyl-L-homocysteine. It carries out the reaction adenosine(37) in tRNA + 2 reduced [2Fe-2S]-[ferredoxin] + 2 S-adenosyl-L-methionine = 2-methyladenosine(37) in tRNA + 5'-deoxyadenosine + L-methionine + 2 oxidized [2Fe-2S]-[ferredoxin] + S-adenosyl-L-homocysteine. Specifically methylates position 2 of adenine 2503 in 23S rRNA and position 2 of adenine 37 in tRNAs. m2A2503 modification seems to play a crucial role in the proofreading step occurring at the peptidyl transferase center and thus would serve to optimize ribosomal fidelity. The chain is Dual-specificity RNA methyltransferase RlmN from Cereibacter sphaeroides (strain ATCC 17029 / ATH 2.4.9) (Rhodobacter sphaeroides).